Consider the following 182-residue polypeptide: Large ribosomal subunit protein uL5 (182 aa).

This sequence belongs to the universal ribosomal protein uL5 family. In terms of assembly, part of the 50S ribosomal subunit; part of the 5S rRNA/L5/L18/L25 subcomplex. Contacts the 5S rRNA and the P site tRNA. Forms a bridge to the 30S subunit in the 70S ribosome.

In terms of biological role, this is one of the proteins that bind and probably mediate the attachment of the 5S RNA into the large ribosomal subunit, where it forms part of the central protuberance. In the 70S ribosome it contacts protein S13 of the 30S subunit (bridge B1b), connecting the 2 subunits; this bridge is implicated in subunit movement. Contacts the P site tRNA; the 5S rRNA and some of its associated proteins might help stabilize positioning of ribosome-bound tRNAs. In Thermus thermophilus (strain ATCC BAA-163 / DSM 7039 / HB27), this protein is Large ribosomal subunit protein uL5.